A 618-amino-acid polypeptide reads, in one-letter code: Dihydroxy-acid dehydratase (618 aa).

Asp81 is a binding site for Mg(2+). Residue Cys122 participates in [2Fe-2S] cluster binding. Mg(2+) is bound by residues Asp123 and Lys124. Position 124 is an N6-carboxylysine (Lys124). Cys195 serves as a coordination point for [2Fe-2S] cluster. Mg(2+) is bound at residue Glu491. The active-site Proton acceptor is Ser517.

This sequence belongs to the IlvD/Edd family. Homodimer. [2Fe-2S] cluster is required as a cofactor. Mg(2+) serves as cofactor.

It catalyses the reaction (2R)-2,3-dihydroxy-3-methylbutanoate = 3-methyl-2-oxobutanoate + H2O. The catalysed reaction is (2R,3R)-2,3-dihydroxy-3-methylpentanoate = (S)-3-methyl-2-oxopentanoate + H2O. It functions in the pathway amino-acid biosynthesis; L-isoleucine biosynthesis; L-isoleucine from 2-oxobutanoate: step 3/4. It participates in amino-acid biosynthesis; L-valine biosynthesis; L-valine from pyruvate: step 3/4. Functions in the biosynthesis of branched-chain amino acids. Catalyzes the dehydration of (2R,3R)-2,3-dihydroxy-3-methylpentanoate (2,3-dihydroxy-3-methylvalerate) into 2-oxo-3-methylpentanoate (2-oxo-3-methylvalerate) and of (2R)-2,3-dihydroxy-3-methylbutanoate (2,3-dihydroxyisovalerate) into 2-oxo-3-methylbutanoate (2-oxoisovalerate), the penultimate precursor to L-isoleucine and L-valine, respectively. The polypeptide is Dihydroxy-acid dehydratase (Rhodopseudomonas palustris (strain ATCC BAA-98 / CGA009)).